Reading from the N-terminus, the 280-residue chain is F-box only protein 27 (280 aa).

Residues 1–26 (MGAWASRGRAARVPAPEPESEPEEAL) form a disordered region. The region spanning 25 to 72 (ALDLSQLPPELLLVVLSHVPPRTLLGRCRQVCRGWRALVDGQALWLLI) is the F-box domain. The FBA domain occupies 100–277 (PCPLGRFCAR…VTNSSVIVRV (178 aa)).

As to quaternary structure, part of a SCF (SKP1-cullin-F-box) protein ligase complex. Interacts with SKP1 and CUL1.

Substrate-recognition component of the SCF (SKP1-CUL1-F-box protein)-type E3 ubiquitin ligase complex. Able to recognize and bind complex-type oligosaccharides. This is F-box only protein 27 (FBXO27) from Macaca fascicularis (Crab-eating macaque).